We begin with the raw amino-acid sequence, 874 residues long: Bifunctional apolipoprotein N-acyltransferase/polyprenol monophosphomannose synthase (874 aa).

Positions 1 to 593 (MKLGAWVAAQ…GRHRATSRSY (593 aa)) are apolipoprotein N-acyltransferase. The next 5 helical transmembrane spans lie at 23 to 42 (TRLVVSIVAGLLLYASFPPR), 72 to 89 (YGLLFGLVFYVSLLPWIG), 94 to 115 (PGPWLALATTCALFPGIFGLFA), 177 to 194 (VALVGCGLTAIALEIEKW), and 206 to 223 (AVVLPAACICLVLFAAIV). The CN hydrolase domain maps to 241-497 (VTVAVVQGNV…PAYLDSQVRL (257 aa)). The active-site Proton acceptor is glutamate 294. The active site involves lysine 359. Cysteine 409 functions as the Nucleophile in the catalytic mechanism. A helical transmembrane segment spans residues 509–526 (PILQWILVGAAAAVVLVA). Disordered stretches follow at residues 533 to 609 (FPRP…NRPS) and 852 to 874 (RARPDIARPGAGGSRVSRADVTE). Residues 594–874 (MTTGQPAPPA…SRVSRADVTE (281 aa)) are polyprenol monophosphomannose synthase.

In the N-terminal section; belongs to the CN hydrolase family. Apolipoprotein N-acyltransferase subfamily. This sequence in the C-terminal section; belongs to the glycosyltransferase 2 family.

It localises to the cell membrane. The enzyme catalyses N-terminal S-1,2-diacyl-sn-glyceryl-L-cysteinyl-[lipoprotein] + a glycerophospholipid = N-acyl-S-1,2-diacyl-sn-glyceryl-L-cysteinyl-[lipoprotein] + a 2-acyl-sn-glycero-3-phospholipid + H(+). It catalyses the reaction a di-trans,poly-cis-dolichyl phosphate + GDP-alpha-D-mannose = a di-trans,poly-cis-dolichyl beta-D-mannosyl phosphate + GDP. The protein operates within protein modification; lipoprotein biosynthesis (N-acyl transfer). In terms of biological role, catalyzes the phospholipid dependent N-acylation of the N-terminal cysteine of apolipoprotein, the last step in lipoprotein maturation. Its function is as follows. Transfers mannose from GDP-mannose to lipid acceptors to form polyprenol monophosphomannose (PPM). PMM is an alkai-stable sugar donor which adds mannose-phosphate residues to triacylated-phosphatidyl-myo-inositol mannosides (PIM2), eventually leading to generation of the cell wall glycolipid lipoglycan modulins lipoarabinomannan (LAM) and lipomannan (LM). This Mycobacterium bovis (strain BCG / Pasteur 1173P2) protein is Bifunctional apolipoprotein N-acyltransferase/polyprenol monophosphomannose synthase.